The primary structure comprises 153 residues: Transcriptional repressor NrdR (153 aa).

Residues cysteine 3 to cysteine 34 fold into a zinc finger. The ATP-cone domain occupies leucine 49–valine 139.

The protein belongs to the NrdR family. Zn(2+) serves as cofactor.

Negatively regulates transcription of bacterial ribonucleotide reductase nrd genes and operons by binding to NrdR-boxes. In Bacillus mycoides (strain KBAB4) (Bacillus weihenstephanensis), this protein is Transcriptional repressor NrdR.